The primary structure comprises 496 residues: Probable cytosol aminopeptidase (496 aa).

Residues Lys262 and Asp267 each contribute to the Mn(2+) site. Lys274 is an active-site residue. The Mn(2+) site is built by Asp285, Asp344, and Glu346. Arg348 is a catalytic residue.

The protein belongs to the peptidase M17 family. Requires Mn(2+) as cofactor.

Its subcellular location is the cytoplasm. The enzyme catalyses Release of an N-terminal amino acid, Xaa-|-Yaa-, in which Xaa is preferably Leu, but may be other amino acids including Pro although not Arg or Lys, and Yaa may be Pro. Amino acid amides and methyl esters are also readily hydrolyzed, but rates on arylamides are exceedingly low.. It carries out the reaction Release of an N-terminal amino acid, preferentially leucine, but not glutamic or aspartic acids.. Functionally, presumably involved in the processing and regular turnover of intracellular proteins. Catalyzes the removal of unsubstituted N-terminal amino acids from various peptides. This Rhizobium johnstonii (strain DSM 114642 / LMG 32736 / 3841) (Rhizobium leguminosarum bv. viciae) protein is Probable cytosol aminopeptidase.